Consider the following 306-residue polypeptide: Putative secretory carrier-associated membrane protein 1 (306 aa).

The disordered stretch occupies residues 1 to 60 (MAGRYDSNPFEEDDVNPFSEQARGKAGGQPSYGGGAFYMPNPRNVPSMSSNSRLSPLPPE). Topologically, residues 1–141 (MAGRYDSNPF…EIPSHLQRMQ (141 aa)) are cytoplasmic. A compositionally biased stretch (gly residues) spans 25–36 (KAGGQPSYGGGA). The span at 44–54 (NVPSMSSNSRL) shows a compositional bias: polar residues. Positions 72 to 109 (LDSSKDLKNREKELQAREAELNKREKELKRREEAAARA) form a coiled coil. 4 helical membrane-spanning segments follow: residues 142–162 (YVAF…VIAV), 174–194 (IWLL…VLWY), 209–229 (FGLF…SAVA), and 257–277 (IFYF…IWVI). The Cytoplasmic portion of the chain corresponds to 278–306 (QQVYMYFRGSGKAAEMKRDATRGAMRAAF).

It belongs to the SCAMP family.

It is found in the cell membrane. Its subcellular location is the cytoplasmic vesicle. The protein resides in the secretory vesicle membrane. Functionally, probably involved in membrane trafficking. This chain is Putative secretory carrier-associated membrane protein 1 (SCAMP1), found in Oryza sativa subsp. indica (Rice).